The primary structure comprises 505 residues: Deoxyguanosinetriphosphate triphosphohydrolase (505 aa).

An HD domain is found at 66–273 (RLTHSMEVQQ…MEAADDISYC (208 aa)).

Belongs to the dGTPase family. Type 1 subfamily. As to quaternary structure, homotetramer. Mg(2+) serves as cofactor.

It carries out the reaction dGTP + H2O = 2'-deoxyguanosine + triphosphate + H(+). Functionally, dGTPase preferentially hydrolyzes dGTP over the other canonical NTPs. The chain is Deoxyguanosinetriphosphate triphosphohydrolase from Escherichia coli O139:H28 (strain E24377A / ETEC).